The primary structure comprises 54 residues: uncharacterized protein (54 aa).

A helical membrane pass occupies residues 6-26 (ILIYLLIFVAGIVIGKIRINV).

The protein resides in the host membrane. This is an uncharacterized protein from Acidianus convivator (ABV).